A 60-amino-acid polypeptide reads, in one-letter code: LKCNKLIPLAYKTCPAGKNLCYKMFMVSNKTVPVKRGCIDVCPKNSLVLKYVCCNTDRCN.

Intrachain disulfides connect Cys-3–Cys-21, Cys-14–Cys-38, Cys-42–Cys-53, and Cys-54–Cys-59.

It belongs to the three-finger toxin family. Short-chain subfamily. Type IA cytotoxin sub-subfamily. As to quaternary structure, monomer in solution; Homodimer and oligomer in the presence of negatively charged lipids forming a pore with a size ranging between 20 and 30 Angstroms. In terms of tissue distribution, expressed by the venom gland.

Its subcellular location is the secreted. It is found in the target cell membrane. Shows cytolytic activity on many different cells by forming pore in lipid membranes. In vivo, increases heart rate or kills the animal by cardiac arrest. In addition, it binds to heparin with high affinity, interacts with Kv channel-interacting protein 1 (KCNIP1) in a calcium-independent manner, and binds to integrin alpha-V/beta-3 (ITGAV/ITGB3) with moderate affinity. The protein is Cytotoxin 3 of Naja naja (Indian cobra).